The primary structure comprises 153 residues: Endoribonuclease YbeY (153 aa).

3 residues coordinate Zn(2+): H114, H118, and H124.

Belongs to the endoribonuclease YbeY family. It depends on Zn(2+) as a cofactor.

The protein localises to the cytoplasm. Its function is as follows. Single strand-specific metallo-endoribonuclease involved in late-stage 70S ribosome quality control and in maturation of the 3' terminus of the 16S rRNA. This Shewanella baltica (strain OS185) protein is Endoribonuclease YbeY.